The primary structure comprises 283 residues: MITIHRVKDLRAAIRQQRTQGKRIGLVPTMGNLHAGHVSLVKQAKELCDYVVTSIFVNPLQFGANEDLDKYPRTLDADKEKLVAAGNHLLFTPEVSQLYPEGLERHTKVITPGLSELHCGASRPSHFTGVTTVVSMLFNMVQPDVAIFGEKDFQQLAVIRKMTRDLYLPIVIESGPTLRETDGLAMSSRNGYLSAEQRQTAPLLYKLLQESAEQIENGDKDFAAISAEANNRLTKAGFVPDYFNIVNSDTLSPAVPSDSDITILAAAYLGTTRLIDNISVHLG.

Position 30-37 (30-37) interacts with ATP; that stretch reads MGNLHAGH. Histidine 37 (proton donor) is an active-site residue. (R)-pantoate is bound at residue glutamine 61. Beta-alanine is bound at residue glutamine 61. 149–152 is an ATP binding site; that stretch reads GEKD. A (R)-pantoate-binding site is contributed by glutamine 155. Residues leucine 178 and 186-189 contribute to the ATP site; that span reads MSSR.

Belongs to the pantothenate synthetase family. As to quaternary structure, homodimer.

The protein localises to the cytoplasm. It carries out the reaction (R)-pantoate + beta-alanine + ATP = (R)-pantothenate + AMP + diphosphate + H(+). Its pathway is cofactor biosynthesis; (R)-pantothenate biosynthesis; (R)-pantothenate from (R)-pantoate and beta-alanine: step 1/1. Its function is as follows. Catalyzes the condensation of pantoate with beta-alanine in an ATP-dependent reaction via a pantoyl-adenylate intermediate. This chain is Pantothenate synthetase, found in Hahella chejuensis (strain KCTC 2396).